A 340-amino-acid polypeptide reads, in one-letter code: Delta(1)-pyrroline-2-carboxylate reductase 2 (340 aa).

Residue Ser50 is the Charge relay system of the active site. Residue His51 is the Proton donor of the active site. Residue Arg55 coordinates substrate. 123–127 provides a ligand contact to NADP(+); the sequence is HFSAL. Thr163 serves as a coordination point for substrate. 181–183 contacts NADP(+); that stretch reads DFA. 189–190 contacts substrate; sequence RG. The active-site Charge relay system is the Asp191. Residues 232–233 and 307–313 each bind NADP(+); these read HK and RLPSQRR.

The protein belongs to the LDH2/MDH2 oxidoreductase family. Homodimer.

It catalyses the reaction L-proline + NAD(+) = 1-pyrroline-2-carboxylate + NADH + H(+). It carries out the reaction L-proline + NADP(+) = 1-pyrroline-2-carboxylate + NADPH + H(+). Catalyzes the reduction of Delta(1)-pyrroline-2-carboxylate (Pyr2C) to L-proline, using NADPH as the electron donor. May be involved in a degradation pathway that converts trans-3-hydroxy-L-proline (t3LHyp) to L-proline. In Burkholderia multivorans (strain ATCC 17616 / 249), this protein is Delta(1)-pyrroline-2-carboxylate reductase 2.